We begin with the raw amino-acid sequence, 457 residues long: Siroheme synthase (457 aa).

The tract at residues Met-1 to Thr-204 is precorrin-2 dehydrogenase /sirohydrochlorin ferrochelatase. Residues Asp-22–Val-23 and Leu-43–Thr-44 each bind NAD(+). Ser-128 carries the post-translational modification Phosphoserine. A uroporphyrinogen-III C-methyltransferase region spans residues Gly-216–Tyr-457. Residue Pro-225 coordinates S-adenosyl-L-methionine. Catalysis depends on Asp-248, which acts as the Proton acceptor. The Proton donor role is filled by Lys-270. S-adenosyl-L-methionine is bound by residues Gly-301 to Asp-303, Ile-306, Thr-331 to Ala-332, Met-382, and Gly-411.

The protein in the N-terminal section; belongs to the precorrin-2 dehydrogenase / sirohydrochlorin ferrochelatase family. This sequence in the C-terminal section; belongs to the precorrin methyltransferase family.

The enzyme catalyses uroporphyrinogen III + 2 S-adenosyl-L-methionine = precorrin-2 + 2 S-adenosyl-L-homocysteine + H(+). It carries out the reaction precorrin-2 + NAD(+) = sirohydrochlorin + NADH + 2 H(+). It catalyses the reaction siroheme + 2 H(+) = sirohydrochlorin + Fe(2+). Its pathway is cofactor biosynthesis; adenosylcobalamin biosynthesis; precorrin-2 from uroporphyrinogen III: step 1/1. It participates in cofactor biosynthesis; adenosylcobalamin biosynthesis; sirohydrochlorin from precorrin-2: step 1/1. The protein operates within porphyrin-containing compound metabolism; siroheme biosynthesis; precorrin-2 from uroporphyrinogen III: step 1/1. It functions in the pathway porphyrin-containing compound metabolism; siroheme biosynthesis; siroheme from sirohydrochlorin: step 1/1. Its pathway is porphyrin-containing compound metabolism; siroheme biosynthesis; sirohydrochlorin from precorrin-2: step 1/1. Multifunctional enzyme that catalyzes the SAM-dependent methylations of uroporphyrinogen III at position C-2 and C-7 to form precorrin-2 via precorrin-1. Then it catalyzes the NAD-dependent ring dehydrogenation of precorrin-2 to yield sirohydrochlorin. Finally, it catalyzes the ferrochelation of sirohydrochlorin to yield siroheme. This is Siroheme synthase from Salmonella choleraesuis (strain SC-B67).